Reading from the N-terminus, the 76-residue chain is Potassium/proton antiporter CemA (76 aa).

A helical membrane pass occupies residues 35–52 (QILSCLVSIFPVILDTIF).

Belongs to the CemA family.

The protein localises to the plastid. Its subcellular location is the chloroplast inner membrane. It carries out the reaction K(+)(in) + H(+)(out) = K(+)(out) + H(+)(in). In terms of biological role, contributes to K(+)/H(+) antiport activity by supporting proton efflux to control proton extrusion and homeostasis in chloroplasts in a light-dependent manner to modulate photosynthesis. Prevents excessive induction of non-photochemical quenching (NPQ) under continuous-light conditions. Indirectly promotes efficient inorganic carbon uptake into chloroplasts. This Vicia faba (Broad bean) protein is Potassium/proton antiporter CemA.